Here is a 347-residue protein sequence, read N- to C-terminus: Pre-B-cell leukemia transcription factor 1 (347 aa).

Positions 1–40 (MDDQPRLMHSHPGVGMAGHPSLSQHMQDGTGANEGEGGRK) are disordered. The PBC domain maps to 38 to 232 (GRKQDIGDIL…VMILRSRFLD (195 aa)). Positions 45 to 124 (DILQQIMTIT…EGVAGPEKGG (80 aa)) are PBC-A. The interval 127–232 (AAAAAAAAAS…VMILRSRFLD (106 aa)) is PBC-B. The homeobox; TALE-type DNA-binding region spans 233 to 295 (ARRKRRNFNK…NKRIRYKKNI (63 aa)). Residues 318-331 (VHGSQANSPSTPSS) are compositionally biased toward polar residues. The disordered stretch occupies residues 318 to 347 (VHGSQANSPSTPSSAGGYPSPCYQSDRRIQ).

It belongs to the TALE/PBX homeobox family. As to quaternary structure, forms a heterodimer with meis1; the interaction is necessary for neural fate induction.

The protein resides in the nucleus. Its function is as follows. Acts as a transcriptional activator in complex with isoform 2 of meis1, to induce posterior neural and neural crest gene expression, and thereby specify hindbrain and neural crest cell fate. Binds to a highly conserved region in the promoter of the neural crest gene zic3. Required for the nuclear transport or retention of meis1. The polypeptide is Pre-B-cell leukemia transcription factor 1 (Xenopus tropicalis (Western clawed frog)).